The chain runs to 488 residues: Cruciferin (488 aa).

The signal sequence occupies residues 1–23; it reads MARLSSLLSFSLALLTFLHGSTA. 2 disulfides stabilise this stretch: Cys30-Cys63 and Cys105-Cys305. 2 Cupin type-1 domains span residues 35–262 and 311–460; these read LNAL…RTAQ and DNLD…EEAR. A disordered region spans residues 116-163; the sequence is QPSGGSPFGEGQGQGQQGQGQGHQGQGQGQQGQQGQQGQQSQGQGFRD. Gly residues predominate over residues 121-147; sequence SPFGEGQGQGQQGQGQGHQGQGQGQQG. The span at 148–160 shows a compositional bias: low complexity; it reads QQGQQGQQSQGQG.

This sequence belongs to the 11S seed storage protein (globulins) family. Hexamer; each subunit is composed of an acidic and a basic chain derived from a single precursor and linked by a disulfide bond.

It is found in the rough endoplasmic reticulum. Its function is as follows. This is a seed storage protein. This chain is Cruciferin (CRUA), found in Brassica napus (Rape).